We begin with the raw amino-acid sequence, 60 residues long: Large ribosomal subunit protein uL30 (60 aa).

The protein belongs to the universal ribosomal protein uL30 family. In terms of assembly, part of the 50S ribosomal subunit.

The protein is Large ribosomal subunit protein uL30 of Baumannia cicadellinicola subsp. Homalodisca coagulata.